The sequence spans 518 residues: MPITSNEISVEVNGQQYTLPAGSTLGDALKVSRAPYIAGTAVGILKEVAEEKIEIVTEYAINTPRGEFRIEINNPESPSGKLWAEHFKEYEGKSIHWASPEALAFGPFEAEIKPSRETGSFEAFEVMFGAGGFDPHNTHLIFSLKRHTAEYGTPEDGVFAEVVTGRKILSRLSREDTILGIEPIIEWEQISEKNCTTDLSVPLEDGNSIFTYFEVELSRNAPKGAEHFYALTREGTLNVDVTTSSFISDDGLKGVTAPYENFEPRREGAISVRTVGYGLGRIYISREERPSSLVHSVVGQVTKGIELIKLAEEGQKLSVESLPPQIVLLGHSFEEAGLVLSSIGVELIKDGYTGEDAVIVSQDPPTTLEILGEAKVTAYAVPRDKLIEIELYPEKAPKSVDFFRHGLELKTKTVGKLPVYMIYDDTYLFKTEKEVVKYKEILPENTPTDKVLGGEIGITNQAAKRMGTIGVRLGDDELFGPTGERFSSTNIVGRIINPEKLLAVKEGDVIYVTEIVRK.

This sequence belongs to the UPF0288 family.

The polypeptide is UPF0288 protein Mbar_A0706 (Methanosarcina barkeri (strain Fusaro / DSM 804)).